The sequence spans 122 residues: Large ribosomal subunit protein bL19c (122 aa).

The protein belongs to the bacterial ribosomal protein bL19 family.

The protein resides in the plastid. It is found in the chloroplast. The sequence is that of Large ribosomal subunit protein bL19c from Gracilaria tenuistipitata var. liui (Red alga).